The sequence spans 245 residues: Carbohydrate deacetylase (245 aa).

2 residues coordinate Mg(2+): H59 and H121.

Belongs to the YdjC deacetylase family. As to quaternary structure, homodimer. Mg(2+) is required as a cofactor.

In terms of biological role, probably catalyzes the deacetylation of acetylated carbohydrates an important step in the degradation of oligosaccharides. In Clostridium beijerinckii (strain ATCC 51743 / NCIMB 8052) (Clostridium acetobutylicum), this protein is Carbohydrate deacetylase.